The following is a 298-amino-acid chain: MATKIELIKELRKTTQASMMDCKKALEQNNDDLEKAIKWLRENGIVKSAKKLGKVAADGCIVLHSDHHKAVMVEINSQTDFVARSQELTDFAQLMISEVFKKATPTTTIEEVTQYELQGKEKVAERLALVASKTDEKIVLRRLMVFESKTNHIFSYLHANKRIGVILEVEGKFDEQDGKHLAMHIAANSPQFIDQDNVDQTWLANETSIIKSQAKLEVQDNPKKAAFLDKTIAGRVNKLLIDICLVNQKYLVDESKTVGQFLKEKNSKVIHFVRFEVGEGIVKEAVDFASEVSAQMKK.

Residues 79–82 (TDFV) form an involved in Mg(2+) ion dislocation from EF-Tu region.

Belongs to the EF-Ts family.

It is found in the cytoplasm. Functionally, associates with the EF-Tu.GDP complex and induces the exchange of GDP to GTP. It remains bound to the aminoacyl-tRNA.EF-Tu.GTP complex up to the GTP hydrolysis stage on the ribosome. This is Elongation factor Ts (tsf) from Mycoplasma pneumoniae (strain ATCC 29342 / M129 / Subtype 1) (Mycoplasmoides pneumoniae).